The chain runs to 114 residues: MERDISKCMAKIAASMNAKFYLNDRFVSFDEVFSETGLLPAIAKRADQLCSLCLGYGLGATYDESEGALLGIRVVFDEVTPNVLRLLCMTDVMNELIQGGPSRDYTPLDELMYD.

In terms of assembly, the T4BSS is a complex nanomachine composed of several subcomplexes. This subunit is part of the Type IV Coupling Complex (T4CC), a subcomplex composed of the DotLMNYZ core and the IcmSW-LvgA adapter subunits, linked by the C-terminal tail of DotL. Interacts with IcmW. IcmS and IcmW form a stable complex. Interacts directly with the type 4 coupling protein DotL. Interacts with LvgA. Interacts with effector proteins.

It localises to the cytoplasm. With respect to regulation, interaction with DotL is critical for the export of IcmSW-dependent substrates. In terms of biological role, component of the Dot/Icm type IVB secretion system (T4BSS), which is used to inject bacterial effector proteins into eukaryotic host cells. Part of a subcomplex which recruits effector proteins and delivers them to the core transmembrane subcomplex. The IcmS/IcmW protein complex plays an important role in protein translocation by interacting with multiple Dot/Icm effector proteins to facilitate their translocation into host cells. Interaction promotes conformational changes in the effector protein, which may facilitate display of a C-terminal translocation signal. May maintain the substrates in a translocation competent form. Required for intracellular growth in host cells, replicative phagosome formation and phagosome trafficking. IcmS is required for IcmW stability. In Legionella pneumophila subsp. pneumophila (strain Philadelphia 1 / ATCC 33152 / DSM 7513), this protein is Type 4 adapter protein IcmS.